The sequence spans 314 residues: Dioxygenase easH (314 aa).

Fe cation is bound by residues His-141, Asp-143, and His-217.

The protein belongs to the PhyH family. In terms of assembly, homodimer. Requires Fe cation as cofactor.

Its pathway is alkaloid biosynthesis; ergot alkaloid biosynthesis. Dioxygenase; part of the gene cluster that mediates the biosynthesis of fungal ergot alkaloid. DmaW catalyzes the first step of ergot alkaloid biosynthesis by condensing dimethylallyl diphosphate (DMAP) and tryptophan to form 4-dimethylallyl-L-tryptophan. The second step is catalyzed by the methyltransferase easF that methylates 4-dimethylallyl-L-tryptophan in the presence of S-adenosyl-L-methionine, resulting in the formation of 4-dimethylallyl-L-abrine. The catalase easC and the FAD-dependent oxidoreductase easE then transform 4-dimethylallyl-L-abrine to chanoclavine-I which is further oxidized by easD in the presence of NAD(+), resulting in the formation of chanoclavine-I aldehyde. Agroclavine dehydrogenase easG then mediates the conversion of chanoclavine-I aldehyde to agroclavine via a non-enzymatic adduct reaction: the substrate is an iminium intermediate that is formed spontaneously from chanoclavine-I aldehyde in the presence of glutathione. The presence of easA is not required to complete this reaction. Further conversion of agroclavine to paspalic acid is a two-step process involving oxidation of agroclavine to elymoclavine and of elymoclavine to paspalic acid, the second step being performed by the elymoclavine oxidase cloA. Paspalic acid is then further converted to D-lysergic acid. Ergopeptines are assembled from D-lysergic acid and three different amino acids by the D-lysergyl-peptide-synthetases composed each of a monomudular and a trimodular nonribosomal peptide synthetase subunit. LpsB and lpsC encode the monomodular subunits responsible for D-lysergic acid activation and incorporation into the ergopeptine backbone. LpsA1 and A2 subunits encode the trimodular nonribosomal peptide synthetase assembling the tripeptide portion of ergopeptines. LpsA1 is responsible for formation of the major ergopeptine, ergotamine, and lpsA2 for alpha-ergocryptine, the minor ergopeptine of the total alkaloid mixture elaborated by C.purpurea. D-lysergyl-tripeptides are assembled by the nonribosomal peptide synthetases and released as N-(D-lysergyl-aminoacyl)-lactams. Cyclolization of the D-lysergyl-tripeptides is performed by the Fe(2+)/2-ketoglutarate-dependent dioxygenase easH which introduces a hydroxyl group into N-(D-lysergyl-aminoacyl)-lactam at alpha-C of the aminoacyl residue followed by spontaneous condensation with the terminal lactam carbonyl group. The sequence is that of Dioxygenase easH from Claviceps purpurea (strain 20.1) (Ergot fungus).